We begin with the raw amino-acid sequence, 129 residues long: GEL complex subunit OPTI (129 aa).

At methionine 1–valine 44 the chain is on the cytoplasmic side. The chain crosses the membrane as a helical span at residues isoleucine 45–leucine 65. Position 66 (arginine 66) is a topological domain, lumenal. A helical membrane pass occupies residues glycine 67–leucine 84. Topologically, residues tyrosine 85–leucine 103 are cytoplasmic. A helical membrane pass occupies residues threonine 104–histidine 127. Topologically, residues tyrosine 128–aspartate 129 are lumenal.

It belongs to the EMC6 family. Component of the GET- and EMC-like (GEL) complex, composed of RAB5IF/OPTI and TMCO1. The GEL complex is part of the multi-pass translocon (MPT) complex, composed of three subcomplexes, the GEL complex (composed of RAB5IF/OPTI and TMCO1), the BOS complex (composed of NCLN/Nicalin, NOMO1 and TMEM147) and the PAT complex (composed of WDR83OS/Asterix and CCDC47). The MPT complex associates with the SEC61 complex. Interacts with NDUFS3, NDUFA4, NDUFV1, NDUFA9 and NDUFS8 of the mitochondrial membrane respiratory chain NADH dehydrogenase (Complex I). Interacts with UQCRC2 of the ubiquinol-cytochrome c reductase complex (Complex III). Interacts with COX5A and COX7C of the cytochrome c oxidase complex (Complex IV). As to expression, expressed in neuronal cells.

The protein localises to the endoplasmic reticulum membrane. Its subcellular location is the mitochondrion inner membrane. Functionally, component of the multi-pass translocon (MPT) complex that mediates insertion of multi-pass membrane proteins into the lipid bilayer of membranes. The MPT complex takes over after the SEC61 complex: following membrane insertion of the first few transmembrane segments of proteins by the SEC61 complex, the MPT complex occludes the lateral gate of the SEC61 complex to promote insertion of subsequent transmembrane regions. Within the MPT complex, the GEL subcomplex may mediate insertion of transmembrane regions into the membrane. In addition to its role in multi-pass membrane insertion, RAB5IF/OPTI also acts as an assembly factor for mitochondrial respiratory complexes. This chain is GEL complex subunit OPTI, found in Mus musculus (Mouse).